The following is a 533-amino-acid chain: Probable lipid II flippase MurJ (533 aa).

Helical transmembrane passes span 25-45 (ETLMAAALGTGPMADVFYAAF), 90-110 (VLFSVLLLITIVMELAMPLLV), 131-151 (LAAVMFPYLMSMSLTAMMSGM), 158-178 (FFAAAVAPIFLNLVMISALFY), 192-212 (YLSWSVLVAGVLQLAVVYIGV), 233-253 (LLLLAIPAAITGGVTQINLVI), 274-294 (IYQLPLGVVGVAVGIVLLPEL), 316-336 (FVLFLTLPAAVALWLLSDDII), 350-370 (TTLVGSILAIFGLGLPAFVLI), 389-409 (YTAIAVAVNSALSILLFPVLA), 412-432 (GIALAEAVAGWLNAVQLFVTL), 449-469 (AMLLVSSAVMGGVIVYLSHRW), and 484-504 (GVLGLLILIAMAVYFIVAFLI).

The protein belongs to the MurJ/MviN family.

It is found in the cell inner membrane. The protein operates within cell wall biogenesis; peptidoglycan biosynthesis. Functionally, involved in peptidoglycan biosynthesis. Transports lipid-linked peptidoglycan precursors from the inner to the outer leaflet of the cytoplasmic membrane. This is Probable lipid II flippase MurJ from Rhizobium tropici.